The following is a 96-amino-acid chain: RNA-binding protein Hfq (96 aa).

The 60-residue stretch at 9–68 folds into the Sm domain; sequence DPFLNALRRERVPVSIYLVNGIKLQGQIESFDQFVILLKNTVSQMVYKHAISTVVPSRPV. Residues 64–96 are disordered; sequence PSRPVSHHSNTGTNQAGTNYSGGNATQQDDVAE. Polar residues predominate over residues 70–96; that stretch reads HHSNTGTNQAGTNYSGGNATQQDDVAE.

It belongs to the Hfq family. As to quaternary structure, homohexamer.

RNA chaperone that binds small regulatory RNA (sRNAs) and mRNAs to facilitate mRNA translational regulation in response to envelope stress, environmental stress and changes in metabolite concentrations. Also binds with high specificity to tRNAs. The chain is RNA-binding protein Hfq from Proteus mirabilis (strain HI4320).